The chain runs to 528 residues: Peptide chain release factor 3 (528 aa).

The tr-type G domain occupies 11–279; it reads NKRRTFAIIS…GIVEWAPKPL (269 aa). GTP contacts are provided by residues 20–27, 88–92, and 142–145; these read SHPDAGKT, DTPGH, and NKLD.

It belongs to the TRAFAC class translation factor GTPase superfamily. Classic translation factor GTPase family. PrfC subfamily.

The protein localises to the cytoplasm. In terms of biological role, increases the formation of ribosomal termination complexes and stimulates activities of RF-1 and RF-2. It binds guanine nucleotides and has strong preference for UGA stop codons. It may interact directly with the ribosome. The stimulation of RF-1 and RF-2 is significantly reduced by GTP and GDP, but not by GMP. This Shewanella sp. (strain W3-18-1) protein is Peptide chain release factor 3.